Reading from the N-terminus, the 149-residue chain is Calmodulin (149 aa).

Alanine 2 is subject to N-acetylalanine. 4 EF-hand domains span residues 8-43 (EQIA…LGQN), 44-79 (PTEA…KMKD), 81-116 (DSEE…LGEK), and 117-149 (LTDE…MMAK). The Ca(2+) site is built by aspartate 21, aspartate 23, aspartate 25, serine 27, glutamate 32, aspartate 57, aspartate 59, asparagine 61, threonine 63, glutamate 68, aspartate 94, aspartate 96, asparagine 98, tyrosine 100, and aspartate 105. Lysine 116 carries the post-translational modification N6,N6,N6-trimethyllysine. Ca(2+)-binding residues include aspartate 130, aspartate 132, aspartate 134, glutamine 136, and glutamate 141.

Belongs to the calmodulin family.

In terms of biological role, calmodulin mediates the control of a large number of enzymes, ion channels and other proteins by Ca(2+). Among the enzymes to be stimulated by the calmodulin-Ca(2+) complex are a number of protein kinases and phosphatases. This Mougeotia scalaris (Green alga) protein is Calmodulin.